Here is a 121-residue protein sequence, read N- to C-terminus: Large ribosomal subunit protein bL12 (121 aa).

Belongs to the bacterial ribosomal protein bL12 family. In terms of assembly, homodimer. Part of the ribosomal stalk of the 50S ribosomal subunit. Forms a multimeric L10(L12)X complex, where L10 forms an elongated spine to which 2 to 4 L12 dimers bind in a sequential fashion. Binds GTP-bound translation factors.

Its function is as follows. Forms part of the ribosomal stalk which helps the ribosome interact with GTP-bound translation factors. Is thus essential for accurate translation. This is Large ribosomal subunit protein bL12 from Shewanella pealeana (strain ATCC 700345 / ANG-SQ1).